The following is a 507-amino-acid chain: Glycerol kinase (507 aa).

Position 14 (T14) interacts with ADP. Residues T14, T15, and S16 each coordinate ATP. Residue T14 coordinates sn-glycerol 3-phosphate. ADP is bound at residue R18. 4 residues coordinate sn-glycerol 3-phosphate: R84, E85, Y136, and D246. Residues R84, E85, Y136, D246, and Q247 each contribute to the glycerol site. Residues T268 and G311 each contribute to the ADP site. The ATP site is built by T268, G311, Q315, and G412. G412 and N416 together coordinate ADP.

Belongs to the FGGY kinase family.

It catalyses the reaction glycerol + ATP = sn-glycerol 3-phosphate + ADP + H(+). It participates in polyol metabolism; glycerol degradation via glycerol kinase pathway; sn-glycerol 3-phosphate from glycerol: step 1/1. Its activity is regulated as follows. Inhibited by fructose 1,6-bisphosphate (FBP). Its function is as follows. Key enzyme in the regulation of glycerol uptake and metabolism. Catalyzes the phosphorylation of glycerol to yield sn-glycerol 3-phosphate. This is Glycerol kinase from Vibrio atlanticus (strain LGP32) (Vibrio splendidus (strain Mel32)).